Reading from the N-terminus, the 409-residue chain is Tryptophan synthase beta chain (409 aa).

Lys92 carries the post-translational modification N6-(pyridoxal phosphate)lysine.

This sequence belongs to the TrpB family. As to quaternary structure, tetramer of two alpha and two beta chains. Requires pyridoxal 5'-phosphate as cofactor.

It catalyses the reaction (1S,2R)-1-C-(indol-3-yl)glycerol 3-phosphate + L-serine = D-glyceraldehyde 3-phosphate + L-tryptophan + H2O. It functions in the pathway amino-acid biosynthesis; L-tryptophan biosynthesis; L-tryptophan from chorismate: step 5/5. The beta subunit is responsible for the synthesis of L-tryptophan from indole and L-serine. The sequence is that of Tryptophan synthase beta chain (trpB) from Methanococcus voltae.